A 378-amino-acid chain; its full sequence is Erythronate-4-phosphate dehydrogenase (378 aa).

2 residues coordinate substrate: Ser-45 and Thr-66. Residues Asp-146 and Thr-175 each contribute to the NAD(+) site. The active site involves Arg-208. Position 232 (Asp-232) interacts with NAD(+). Glu-237 is an active-site residue. His-254 functions as the Proton donor in the catalytic mechanism. Gly-257 is an NAD(+) binding site. Position 258 (Tyr-258) interacts with substrate.

It belongs to the D-isomer specific 2-hydroxyacid dehydrogenase family. PdxB subfamily. In terms of assembly, homodimer.

The protein resides in the cytoplasm. The catalysed reaction is 4-phospho-D-erythronate + NAD(+) = (R)-3-hydroxy-2-oxo-4-phosphooxybutanoate + NADH + H(+). It participates in cofactor biosynthesis; pyridoxine 5'-phosphate biosynthesis; pyridoxine 5'-phosphate from D-erythrose 4-phosphate: step 2/5. In terms of biological role, catalyzes the oxidation of erythronate-4-phosphate to 3-hydroxy-2-oxo-4-phosphonooxybutanoate. The polypeptide is Erythronate-4-phosphate dehydrogenase (Klebsiella pneumoniae (strain 342)).